We begin with the raw amino-acid sequence, 965 residues long: Fibronectin-binding protein A (965 aa).

A signal peptide spans 1–36; sequence MKNNLRYGIRKHKLGAASVFLGTMIVIGMGQDKEAA. The YSIRK-G/S signaling motif motif lies at 7 to 18; sequence YGIRKHKLGAAS. Residues 37–206 form a disordered region; that stretch reads ASEQKTTTVE…VTSKVTVEDE (170 aa). The ligand-binding A region stretch occupies residues 37-514; that stretch reads ASEQKTTTVE…SNKANGDGKY (478 aa). Residues 39-55 are compositionally biased toward polar residues; that stretch reads EQKTTTVEENGNSATDN. Positions 59-74 are enriched in low complexity; it reads ETQTTTTNVNTIDETQ. Residues 75 to 92 show a composition bias toward polar residues; that stretch reads SYSATATEQPSNATQVTT. The segment covering 112 to 122 has biased composition (basic and acidic residues); that stretch reads TVKEEVVKEEA. The span at 126-139 shows a compositional bias: polar residues; the sequence is VKETTQSQDNSGDQ. A compositionally biased stretch (basic and acidic residues) spans 179–193; the sequence is DVAEAKEASDAKVET. Residues 194-514 form a fibrinogen/elastin/tropoelastin-binding region; it reads GTDVTSKVTV…SNKANGDGKY (321 aa). A fibronectin-binding region spans residues 515–837; the sequence is GPIVDSNNFE…EGQQTIEEDT (323 aa). The B-1 repeat unit spans residues 548-577; it reads ENQDNTPLDIDYHTAIDGEGGYVDGYIETI. Positions 548-607 are 2 X approximate tandem repeats; sequence ENQDNTPLDIDYHTAIDGEGGYVDGYIETIEETDSSAIDIDYHTAVDSEAGHVGGYTESS. The B-2 repeat unit spans residues 578–607; sequence EETDSSAIDIDYHTAVDSEAGHVGGYTESS. Disordered regions lie at residues 598-625, 743-774, 794-903, and 916-942; these read GHVGGYTESSEESNPIDFEESTHENSKH, LGYEGGQNSGNQSFEEDTEEDKPKYEQGGNII, IEED…GKVV, and VAPTKQKQAKKSELPETGGEESTNKGM. Residues 748 to 770 form a D-1; truncated repeat; it reads GQNSGNQSFEEDTEEDKPKYEQG. The segment at 748 to 839 is 4 X approximate tandem repeats; the sequence is GQNSGNQSFE…QQTIEEDTTP (92 aa). Residues 771 to 785 form a D-2; truncated repeat; the sequence is GNIIDIDFDSVPQIH. The stretch at 786-824 is one D-3 repeat; it reads GFNKHNEIIEEDTNKDKPNYQFGGHNSVDFEEDTLPKVS. Residues 794 to 803 are compositionally biased toward basic and acidic residues; it reads IEEDTNKDKP. The D-4; truncated repeat unit spans residues 825–839; it reads GQNEGQQTIEEDTTP. Pro residues predominate over residues 839–885; the sequence is PPTPPTPEVPSEPGTPTPPTPEVPSEPGKPTPPTPEVPAEPGKPVPP. WR repeat units lie at residues 840-853, 854-867, 868-881, and 882-895; these read PTPPTPEVPSEPGT, PTPPTPEVPSEPGK, PTPPTPEVPAEPGK, and PVPPAKEEPKKPSK. A 4 X tandem repeats, Pro-rich (WR) region spans residues 840–895; that stretch reads PTPPTPEVPSEPGTPTPPTPEVPSEPGKPTPPTPEVPAEPGKPVPPAKEEPKKPSK. The LPXTG sorting signal motif lies at 929–933; that stretch reads LPETG. Thr-932 carries the pentaglycyl murein peptidoglycan amidated threonine modification. Residues 933 to 965 constitute a propeptide, removed by sortase; sequence GGEESTNKGMLFGGLFSILGLALLRRNKKNHKA.

The protein localises to the secreted. Its subcellular location is the cell wall. Functionally, promotes bacterial attachment to multiple substrates, such as fibronectin (Fn), fibrinogen (Fg), elastin peptides and tropoelastin. This confers to S.aureus the ability to invade endothelial cells. Promotes adherence to and aggregation of activated platelets. The sequence is that of Fibronectin-binding protein A (fnbA) from Staphylococcus aureus (strain MRSA252).